Consider the following 311-residue polypeptide: Probable deoxyhypusine synthase (311 aa).

K284 acts as the Nucleophile in catalysis.

It belongs to the deoxyhypusine synthase family. NAD(+) serves as cofactor.

It carries out the reaction [eIF5A protein]-L-lysine + spermidine = [eIF5A protein]-deoxyhypusine + propane-1,3-diamine. Its pathway is protein modification; eIF5A hypusination. Functionally, catalyzes the NAD-dependent oxidative cleavage of spermidine and the subsequent transfer of the butylamine moiety of spermidine to the epsilon-amino group of a specific lysine residue of the eIF-5A precursor protein to form the intermediate deoxyhypusine residue. The protein is Probable deoxyhypusine synthase of Picrophilus torridus (strain ATCC 700027 / DSM 9790 / JCM 10055 / NBRC 100828 / KAW 2/3).